The chain runs to 738 residues: Alanine--tRNA ligase (738 aa).

4 residues coordinate Zn(2+): His-564, His-568, Cys-666, and His-670.

The protein belongs to the class-II aminoacyl-tRNA synthetase family. As to quaternary structure, homotetramer. It depends on Zn(2+) as a cofactor.

It localises to the cytoplasm. It catalyses the reaction tRNA(Ala) + L-alanine + ATP = L-alanyl-tRNA(Ala) + AMP + diphosphate. Functionally, catalyzes the attachment of alanine to tRNA(Ala) in a two-step reaction: alanine is first activated by ATP to form Ala-AMP and then transferred to the acceptor end of tRNA(Ala). Also edits incorrectly charged Ser-tRNA(Ala) and Gly-tRNA(Ala) via its editing domain. This is Alanine--tRNA ligase (alaS) from Yersinia pestis bv. Antiqua (strain Antiqua).